The primary structure comprises 363 residues: Histidinol-phosphate aminotransferase (363 aa).

K218 carries the N6-(pyridoxal phosphate)lysine modification.

This sequence belongs to the class-II pyridoxal-phosphate-dependent aminotransferase family. Histidinol-phosphate aminotransferase subfamily. Homodimer. Requires pyridoxal 5'-phosphate as cofactor.

It catalyses the reaction L-histidinol phosphate + 2-oxoglutarate = 3-(imidazol-4-yl)-2-oxopropyl phosphate + L-glutamate. Its pathway is amino-acid biosynthesis; L-histidine biosynthesis; L-histidine from 5-phospho-alpha-D-ribose 1-diphosphate: step 7/9. This chain is Histidinol-phosphate aminotransferase, found in Xanthomonas axonopodis pv. citri (strain 306).